The primary structure comprises 329 residues: (12E)-labda-8(17),12,14-triene synthase (329 aa).

Mg(2+)-binding residues include aspartate 90 and glutamate 95. Positions 90–95 match the DDXXXE motif motif; sequence DDMHGE. Position 184 (arginine 184) interacts with substrate. 2 residues coordinate Mg(2+): asparagine 230 and serine 234. An NXXXSXXXE motif motif is present at residues 230-238; it reads NDLASYERE. Arginine 237 lines the substrate pocket. A Mg(2+)-binding site is contributed by glutamate 238. 316–317 provides a ligand contact to substrate; it reads RY.

The protein belongs to the terpene synthase family. The cofactor is Mg(2+).

It carries out the reaction (+)-copalyl diphosphate = (12E)-labda-8(17),12,14-triene + diphosphate. Functionally, involved in the biosynthesis of the mercapturic acid derivative diterpene cyslabdan A, a potentiator of the beta-lactam antibiotic imipenem. Catalyzes the conversion of (+)-copalyl diphosphate to yield labda-8(17),12(E),14-triene (biformene). This Streptomyces cyslabdanicus protein is (12E)-labda-8(17),12,14-triene synthase.